The primary structure comprises 85 residues: Protein AC4 (85 aa).

Gly2 carries N-myristoyl glycine; by host lipidation. Residues 44–63 form a disordered region; the sequence is RAPMSNPTSRKTGTVSNGDC. Residues 46–62 are compositionally biased toward polar residues; it reads PMSNPTSRKTGTVSNGD.

Belongs to the geminiviridae protein AC4/C4 family.

The protein localises to the host cell membrane. Pathogenicity determinant. May act as a suppressor of RNA-mediated gene silencing, also known as post-transcriptional gene silencing (PTGS), a mechanism of plant viral defense that limits the accumulation of viral RNAs. This chain is Protein AC4, found in Potato yellow mosaic virus (isolate Venezuela) (PYMV).